A 1174-amino-acid polypeptide reads, in one-letter code: MSTYFGVYIPTSKAGCFEGSVSQCIGSIAAVNIKPSNPASGSASVASGSPSGSAASVQTGNADDGSAATKYEDPDYPPDSPLWLIFTEKSKALDILRHYKEARLREFPNLEQAESYVQFGFESIEALKRFCKAKPESKPIPIISGSGYKSSPTSTDNSCSSSPTGNGSGFIIPLGSNSSMSNLLLSDSPTSSPSSSSNVIANGRQQQMQQQQQQQPQQPDVSGEGPPFRAPTKQELVEFRKQIEGGHIDRVKRIIWENPRFLISSGDTPTSLKEGCRYNAMHICAQVNKARIAQLLLKTISDREFTQLYVGKKGSGKMCAALNISLLDYYLNMPDKGRGETPLHFAAKNGHVAMVEVLVSYPECKSLRNHEGKEPKEIICLRNANATHVTIKKLELLLYDPHFVPVLRSQSNTLPPKVGQPFSPKDPPNLQHKADDYEGLSVDLAISALAGPMSREKAMNFYRRWKTPPRVSNNVMSPLAGSPFSSPVKVTPSKSIFDRSAGNSSPVHSGRRVLFSPLAEATSSPKPTKNVPNGTNECEHNNNNVKPVYPLEFPATPIRKMKPDLFMAYRNNNSFDSPSLADDSQILDMSLSRSLNASLNDSFRERHIKNTDIEKGLEVVGRQLARQEQLEWREYWDFLDSFLDIGTTEGLARLEAYFLEKTEQQADKSETVWNFAHLHQYFDSMAGEQQQQLRKDKNEAAGATSPSAGVMTPYTCVEKSLQVFAKRITKTLINKIGNMVSINDTLLCELKRLKSLIVSFKDDARFISVDFSKVHSRIAHLVASYVTHSQEVSVAMRLQLLQMLRSLRQLLADERGREQHLGCVCASLLLMLEQAPTSAVHLPDTLKTEELCCAAWETEQCCACLWDANLSRKTSRRKRTKSLRAAAVVQSQGQLQDTSGSTGSSALHASLGVGSTSLGASRVVASASKDAWRRQQSDDEDYDSDEQVIFFDCTNVTLPYGSSSEDEENFRTPPQSLSPGISMDLEPRYELFIFGNEPTKRDLDVLNALSNVDIDKETLPHVYAWKTAMESYSCAEMNLFPSPRNVKVQKPEPWYSGTSSSHNSQPLLHPKRLLATPKLNAVVSGRRGSGPLTAPVTPRLARTPSAASIQVASETNGESVGTAVTPASPILSFAALTAATQSFQTPLNKVRGLFSQYRDQRSYNEGDTPLGNRN.

4 stretches are compositionally biased toward low complexity: residues Asn-37–Ser-56, Ser-150–Thr-164, Leu-174–Asn-198, and Gln-205–Pro-219. Disordered stretches follow at residues Asn-37–Pro-74 and Pro-141–Ala-230. The stretch at Arg-338–Leu-367 is one ANK repeat. Disordered regions lie at residues Ala-519–Asn-543 and Gly-961–Ile-981. Residues Ala-521–Pro-532 are compositionally biased toward polar residues. A compositionally biased stretch (low complexity) spans Asn-533–Asn-543.

The protein belongs to the ANKLE2 family.

The protein resides in the endoplasmic reticulum. It is found in the nucleus envelope. Its subcellular location is the cytoplasm. In terms of biological role, involved in brain development probably by regulating asymmetric division of neuroblasts. Regulates neuroblast asymmetric cell division by controlling asymmetric protein localization of Mira, Baz, Par-6 and aPKC, and spindle alignment. Also, regulates the localization of kinase Ball during mitosis, specifically maintaining Ball in the nucleus during interphase. Required for proper ER and nuclear envelope morphology in neuroblasts. The chain is Ankyrin repeat and LEM domain-containing protein 2 homolog from Drosophila melanogaster (Fruit fly).